A 90-amino-acid chain; its full sequence is Aminoacyl carrier protein 1 (90 aa).

The Carrier domain maps to 6-84 (TDVRNRIIKL…TLERMVMTQL (79 aa)). S42 is modified (O-(pantetheine 4'-phosphoryl)serine).

In terms of processing, 4'-phosphopantetheine is transferred from CoA to a specific serine of the apo-form of this carrier protein.

Aminoacyl carrier protein. Can be charged with L-glycine via the formation of a thioester bond between the amino acid and the 4'-phosphopantetheinyl prosthetic group, catalyzed by the bll0957 ligase. The protein is Aminoacyl carrier protein 1 of Bradyrhizobium diazoefficiens (strain JCM 10833 / BCRC 13528 / IAM 13628 / NBRC 14792 / USDA 110).